The primary structure comprises 744 residues: Catalase-peroxidase (744 aa).

Positions Met1–Asp21 are disordered. Residues Trp91 to Tyr241 constitute a cross-link (tryptophyl-tyrosyl-methioninium (Trp-Tyr) (with M-267)). His92 serves as the catalytic Proton acceptor. Residues Tyr241–Met267 constitute a cross-link (tryptophyl-tyrosyl-methioninium (Tyr-Met) (with W-91)). Heme b is bound at residue His282. Residues Gly361 to Ala387 are disordered.

The protein belongs to the peroxidase family. Peroxidase/catalase subfamily. In terms of assembly, homodimer or homotetramer. The cofactor is heme b. Formation of the three residue Trp-Tyr-Met cross-link is important for the catalase, but not the peroxidase activity of the enzyme.

The catalysed reaction is H2O2 + AH2 = A + 2 H2O. The enzyme catalyses 2 H2O2 = O2 + 2 H2O. In terms of biological role, bifunctional enzyme with both catalase and broad-spectrum peroxidase activity. In Pseudomonas entomophila (strain L48), this protein is Catalase-peroxidase.